The sequence spans 266 residues: Thymidylate synthase (266 aa).

Arginine 24 is a dUMP binding site. Residue histidine 54 participates in (6R)-5,10-methylene-5,6,7,8-tetrahydrofolate binding. Residue 129–130 (RR) participates in dUMP binding. The Nucleophile role is filled by cysteine 149. DUMP contacts are provided by residues 169–172 (RSAD), asparagine 180, and 210–212 (HIY). Aspartate 172 serves as a coordination point for (6R)-5,10-methylene-5,6,7,8-tetrahydrofolate. Alanine 265 contacts (6R)-5,10-methylene-5,6,7,8-tetrahydrofolate.

This sequence belongs to the thymidylate synthase family. Bacterial-type ThyA subfamily. Homodimer.

Its subcellular location is the cytoplasm. It carries out the reaction dUMP + (6R)-5,10-methylene-5,6,7,8-tetrahydrofolate = 7,8-dihydrofolate + dTMP. The protein operates within pyrimidine metabolism; dTTP biosynthesis. Its function is as follows. Catalyzes the reductive methylation of 2'-deoxyuridine-5'-monophosphate (dUMP) to 2'-deoxythymidine-5'-monophosphate (dTMP) while utilizing 5,10-methylenetetrahydrofolate (mTHF) as the methyl donor and reductant in the reaction, yielding dihydrofolate (DHF) as a by-product. This enzymatic reaction provides an intracellular de novo source of dTMP, an essential precursor for DNA biosynthesis. The chain is Thymidylate synthase from Mycobacterium bovis (strain ATCC BAA-935 / AF2122/97).